The following is a 331-amino-acid chain: Pectinesterase (331 aa).

The N-terminal stretch at methionine 1 to alanine 17 is a signal peptide. Glutamine 138 is a binding site for substrate. The Proton donor role is filled by aspartate 161. Catalysis depends on aspartate 182, which acts as the Nucleophile. Substrate-binding residues include arginine 247 and tryptophan 249.

Belongs to the pectinesterase family.

It localises to the secreted. It carries out the reaction [(1-&gt;4)-alpha-D-galacturonosyl methyl ester](n) + n H2O = [(1-&gt;4)-alpha-D-galacturonosyl](n) + n methanol + n H(+). The protein operates within glycan metabolism; pectin degradation; 2-dehydro-3-deoxy-D-gluconate from pectin: step 1/5. Functionally, involved in maceration and soft-rotting of plant tissue. The sequence is that of Pectinesterase (pme1) from Aspergillus niger.